Consider the following 1368-residue polypeptide: MQYSFTEKKRIRKSFAKRSIVHQVPFLLATQLESFSTFLQADVLPAQRKSEGLQAAFTSVFPIVSHNGFARLEFVSYALSSPAFNIKECQQRGLTYCSALRAKVRLVLLDKESPSKPVVKEVKEQEVYMGEIPLMTPTGSFVINGTERVIVSQLHRSPGVFFEHDKGKTHSSGKLLFSARIIPYRGSWLDFEFDPKDVLYFRVDRRRKMPVTILLKAIGLTPEQILANFFVFDNFTLMDEGAQMEFVPERLRGEVARFDITDREGKVIVQKDKRINAKHIRDLEAAKTKYISVPEDYLLGRVLAKNVVDGDTGEVIANANDEITEGVLDKLREAKIKEIQTLYTNDLDQGPYISSTLRVDETVDKTAARIAIYRMMRPGEPPTEEAVEALFNRLFYSEDAYDLSKVGRMKFNRRVGRDEITGPMTLQDDDILATIKILVELRNGKGEVDDIDHLGNRRVRCVGELAENQFRAGLVRVERAVKERLGQAESENLMPHDLINSKPISSAIREFFGSSQLSQFMDQTNPLSEITHKRRVSALGPGGLTRERAGFEVRDVHPTHYGRVCPIETPEGPNIGLINSLALYAHLNEYGFLETPYRKVVDSKVTDQIDYLSAIEEGRYMIAQANAAISNDGSLVDELVSSREAGETMMVTPDRIQYMDVAPSQIVSVAASLIPFLEHDDANRALMGSNMQRQAVPCLRPEKPVVGTGIERTVAVDSGTTVQALRGGVVDYVDAGRIVIRVNDDEAVAGEVGVDIYNLIKYTRSNQNTNINQRPIVKMGDKVARGDVLADGASTDLGELALGQNMLIAFMPWNGYNFEDSILISERVVADDRYTSIHIEELNVVARDTKLGPEEITRDISNLAEVQLGRLDESGIVYIGAEVEAGDVLVGKVTPKGETQLTPEEKLLRAIFGEKASDVKDTSLRVPSGMSGTVIDVQVFTREGIQRDKRAQQIIDDELKRYRLDLNDQLRIVEGDAFQRLARMLVGKVANGGPKKLAKGTKIDQAYLEDLDHYHWFDIRLADDEAAAQLEAIKNSIEEKRHQFDLAFEEKRKKLTQGDELPPGVLKMVKVYLAVKRRLQPGDKMAGRHGNKGVVSKIVPVEDMPYMADGRPADVVLNPLGVPSRMNVGQVLEVHLGWAAKGLGWRIGEMLARQTKIEELRVFLTKIYNESGRAEDLESFSDDEILELAKNLREGVPFATPVFDGATEEEMSKMLDLAFPDDIAEQLDMNPSKNQVRLYDGRTGEPFERRVTVGYMHYLKLHHLVDDKMHARSTGPYSLVTQQPLGGKAQFGGQRFGEMEVWALEAYGASYVLQEMLTVKSDDVTGRTKVYENLVKGDHVIDAGMPESFNVLVKEIRSLGIDIDLDRN.

Belongs to the RNA polymerase beta chain family. The RNAP catalytic core consists of 2 alpha, 1 beta, 1 beta' and 1 omega subunit. When a sigma factor is associated with the core the holoenzyme is formed, which can initiate transcription.

The enzyme catalyses RNA(n) + a ribonucleoside 5'-triphosphate = RNA(n+1) + diphosphate. DNA-dependent RNA polymerase catalyzes the transcription of DNA into RNA using the four ribonucleoside triphosphates as substrates. The chain is DNA-directed RNA polymerase subunit beta from Burkholderia thailandensis (strain ATCC 700388 / DSM 13276 / CCUG 48851 / CIP 106301 / E264).